The primary structure comprises 114 residues: MGPGLLCWALLCLLGAGLVDAGVTQSPTHLIKTRGQQVTLRCSPKSGHDTVSWYQQALGQGPQFIFQYYEEEERQRGNFPDRFSGHQFPNYSSELNVNALLLGDSALYLCASSL.

The first 21 residues, 1-21, serve as a signal peptide directing secretion; the sequence is MGPGLLCWALLCLLGAGLVDA. The region spanning 22–114 is the Ig-like domain; it reads GVTQSPTHLI…SALYLCASSL (93 aa). Cys-42 and Cys-110 are joined by a disulfide. Asn-90 is a glycosylation site (N-linked (GlcNAc...) asparagine).

As to quaternary structure, alpha-beta TR is a heterodimer composed of an alpha and beta chain; disulfide-linked. The alpha-beta TR is associated with the transmembrane signaling CD3 coreceptor proteins to form the TR-CD3 (TcR or TCR). The assembly of alpha-beta TR heterodimers with CD3 occurs in the endoplasmic reticulum where a single alpha-beta TR heterodimer associates with one CD3D-CD3E heterodimer, one CD3G-CD3E heterodimer and one CD247 homodimer forming a stable octameric structure. CD3D-CD3E and CD3G-CD3E heterodimers preferentially associate with TR alpha and TR beta chains, respectively. The association of the CD247 homodimer is the last step of TcR assembly in the endoplasmic reticulum and is required for transport to the cell surface.

The protein resides in the cell membrane. In terms of biological role, v region of the variable domain of T cell receptor (TR) beta chain that participates in the antigen recognition. Alpha-beta T cell receptors are antigen specific receptors which are essential to the immune response and are present on the cell surface of T lymphocytes. Recognize peptide-major histocompatibility (MH) (pMH) complexes that are displayed by antigen presenting cells (APC), a prerequisite for efficient T cell adaptive immunity against pathogens. Binding of alpha-beta TR to pMH complex initiates TR-CD3 clustering on the cell surface and intracellular activation of LCK that phosphorylates the ITAM motifs of CD3G, CD3D, CD3E and CD247 enabling the recruitment of ZAP70. In turn ZAP70 phosphorylates LAT, which recruits numerous signaling molecules to form the LAT signalosome. The LAT signalosome propagates signal branching to three major signaling pathways, the calcium, the mitogen-activated protein kinase (MAPK) kinase and the nuclear factor NF-kappa-B (NF-kB) pathways, leading to the mobilization of transcription factors that are critical for gene expression and essential for T cell growth and differentiation. The T cell repertoire is generated in the thymus, by V-(D)-J rearrangement. This repertoire is then shaped by intrathymic selection events to generate a peripheral T cell pool of self-MH restricted, non-autoaggressive T cells. Post-thymic interaction of alpha-beta TR with the pMH complexes shapes TR structural and functional avidity. This is T cell receptor beta variable 5-6 from Homo sapiens (Human).